We begin with the raw amino-acid sequence, 192 residues long: Immunity protein YqcF (192 aa).

In terms of assembly, probably interacts with cognate toxin YqcG but not with other non-cognate toxins. The interaction inhibits the toxic activity of YqcG.

The protein localises to the cytoplasm. In terms of biological role, immunity component of one of 6 LXG toxin-immunity modules in this strain. They promote kin selection, mediate competition in biofilms, and drive spatial segregation of different strains, indicating that LXG toxins may help avoid warfare between strains in biofilms. Mediates intercellular competition during biofilm formation; disruption of the operon disadvantages the bacteria, but overexpression of the cognate immunity protein restores growth in competition with wild-type. In situ neutralizes the toxic effect of cognate toxin YqcG. Neutralizes the toxic activity of cognate toxin YqcG upon expression in E.coli. Does not have immunity protein activity on other LXG toxins. This is Immunity protein YqcF (yqcF) from Bacillus subtilis (strain 168).